A 281-amino-acid polypeptide reads, in one-letter code: Pantothenate synthetase (281 aa).

30–37 (MGYLHEGH) serves as a coordination point for ATP. The active-site Proton donor is His37. Gln61 is a binding site for (R)-pantoate. Residue Gln61 participates in beta-alanine binding. ATP is bound at residue 147–150 (GQKD). Gln153 serves as a coordination point for (R)-pantoate. ATP is bound by residues Val176 and 184–187 (MSSR).

Belongs to the pantothenate synthetase family. Homodimer.

The protein resides in the cytoplasm. It catalyses the reaction (R)-pantoate + beta-alanine + ATP = (R)-pantothenate + AMP + diphosphate + H(+). It participates in cofactor biosynthesis; (R)-pantothenate biosynthesis; (R)-pantothenate from (R)-pantoate and beta-alanine: step 1/1. Catalyzes the condensation of pantoate with beta-alanine in an ATP-dependent reaction via a pantoyl-adenylate intermediate. This is Pantothenate synthetase from Acetivibrio thermocellus (strain ATCC 27405 / DSM 1237 / JCM 9322 / NBRC 103400 / NCIMB 10682 / NRRL B-4536 / VPI 7372) (Clostridium thermocellum).